The primary structure comprises 564 residues: R-linalool synthase (564 aa).

Residues Asp-320, Asp-324, Asp-464, Thr-468, and Glu-472 each coordinate Mg(2+). A DDXXD motif motif is present at residues 320–324 (DDVYD).

The protein belongs to the terpene synthase family. Requires Mg(2+) as cofactor. Mn(2+) serves as cofactor.

The enzyme catalyses (2E)-geranyl diphosphate + H2O = (R)-linalool + diphosphate. Its function is as follows. Specifically catalyzes production of (R)-(-)-linalool, the main component of lavender essential oil. In Lavandula angustifolia (Lavender), this protein is R-linalool synthase.